A 330-amino-acid polypeptide reads, in one-letter code: PDZ and LIM domain protein 4 (330 aa).

The region spanning 1–84 is the PDZ domain; the sequence is MTHAVTLRGP…HLTLSVSRPE (84 aa). Disordered stretches follow at residues 104 to 154 and 219 to 239; these read DPEA…NEVT and EAGE…KPAA. Residues Ser111, Ser115, Ser118, Ser119, Ser124, and Ser134 each carry the phosphoserine modification. Polar residues predominate over residues 111 to 122; that stretch reads SPATSRRSSISG. In terms of domain architecture, LIM zinc-binding spans 255-305; it reads CTRCGHGIVGTIVKARDKLYHPECFMCSDCGLNLKQRGYFFLDERLYCENH.

As to quaternary structure, homodimer. Interacts (via C-terminus only or via combined C-terminus and LIM domain, but not LIM domain only) with PTPN13 (via the second or fourth PDZ domains). Found in a complex with PTPN13 and TRIP6. Interacts (via PDZ domain) with ACTN1 and ACTN2 (via C-terminal SDL residues). Interacts (via PDZ domain) with TRIP6 (via the second LIM domain or via the third LIM domain plus C-terminus). Interacts (via LIM domain) with GRIA1 (via C-terminus); this interaction as well as the interaction with alpha-actinin is required for their colocalization in early endosomes. Interacts with PDLIM1. Forms (via LIM domain) a heterodimer with PDLIM3. Interacts directly with SRC (via kinase domain and to a lesser extent the SH2 domain). Phosphorylated on tyrosine residue(s). Can be dephosphorylated by PTPN13. In terms of tissue distribution, detected in several tissues, most prominent in brain and heart of adults. Expressed in embryonic fibroblasts.

It localises to the cytoplasm. It is found in the cytoskeleton. Its subcellular location is the cell projection. The protein resides in the dendritic spine. The protein localises to the early endosome membrane. It localises to the recycling endosome membrane. It is found in the nucleus. Its subcellular location is the perinuclear region. The protein resides in the lamellipodium. The protein localises to the synapse. It localises to the synaptosome. Suppresses SRC activation by recognizing and binding to active SRC and facilitating PTPN13-mediated dephosphorylation of SRC 'Tyr-419' leading to its inactivation. Inactivated SRC dissociates from this protein allowing the initiation of a new SRC inactivation cycle. Involved in reorganization of the actin cytoskeleton. In nonmuscle cells, binds to ACTN1 (alpha-actinin-1), increases the affinity of ACTN1 to F-actin (filamentous actin), and promotes formation of actin stress fibers. Involved in regulation of the synaptic AMPA receptor transport in dendritic spines of hippocampal pyramidal neurons directing the receptors toward an insertion at the postsynaptic membrane. Links endosomal surface-internalized GRIA1-containing AMPA receptors to the alpha-actinin/actin cytoskeleton. Increases AMPA receptor-mediated excitatory postsynaptic currents in neurons. The sequence is that of PDZ and LIM domain protein 4 (Pdlim4) from Rattus norvegicus (Rat).